The following is a 226-amino-acid chain: uncharacterized protein (226 aa).

A helical membrane pass occupies residues 203 to 225; sequence FGISDIYTSTLSFGLIISLFYLL.

The protein localises to the membrane. This is an uncharacterized protein from Acanthamoeba polyphaga (Amoeba).